Here is a 261-residue protein sequence, read N- to C-terminus: Hemin import ATP-binding protein HmuV (261 aa).

Residues 3–243 (LQAQDLSVDR…ANLRRVYGVE (241 aa)) form the ABC transporter domain. 35-42 (GANGAGKS) contacts ATP.

The protein belongs to the ABC transporter superfamily. Heme (hemin) importer (TC 3.A.1.14.5) family. The complex is composed of two ATP-binding proteins (HmuV), two transmembrane proteins (HmuU) and a solute-binding protein (HmuT).

Its subcellular location is the cell inner membrane. In terms of biological role, part of the ABC transporter complex HmuTUV involved in hemin import. Responsible for energy coupling to the transport system. This Bordetella avium (strain 197N) protein is Hemin import ATP-binding protein HmuV.